The chain runs to 314 residues: Methionyl-tRNA formyltransferase (314 aa).

110 to 113 (SLLP) lines the (6S)-5,6,7,8-tetrahydrofolate pocket.

The protein belongs to the Fmt family.

The catalysed reaction is L-methionyl-tRNA(fMet) + (6R)-10-formyltetrahydrofolate = N-formyl-L-methionyl-tRNA(fMet) + (6S)-5,6,7,8-tetrahydrofolate + H(+). In terms of biological role, attaches a formyl group to the free amino group of methionyl-tRNA(fMet). The formyl group appears to play a dual role in the initiator identity of N-formylmethionyl-tRNA by promoting its recognition by IF2 and preventing the misappropriation of this tRNA by the elongation apparatus. The protein is Methionyl-tRNA formyltransferase of Bacillus thuringiensis subsp. konkukian (strain 97-27).